Here is a 452-residue protein sequence, read N- to C-terminus: PTS system N-acetylglucosamine-specific EIICB component (452 aa).

One can recognise a PTS EIIC type-1 domain in the interval 1-361 (MLSFLQKLGK…LNLKTPGRED (361 aa)). Transmembrane regions (helical) follow at residues 8-28 (LGKS…ILAL), 42-62 (AGTA…AIGI), 91-111 (TNNM…YTYN), 130-150 (LVPI…GVVW), 163-183 (WMLG…RLLI), 223-243 (MTGF…AMVV), 257-277 (MIGF…EFAF), 279-299 (FLSP…LFIV), and 329-349 (LLLL…YVLI). The region spanning 375–452 (DVNENIMLKG…AAEELRAAVK (78 aa)) is the PTS EIIB type-1 domain. Cys-397 (phosphocysteine intermediate; for EIIB activity) is an active-site residue.

In terms of assembly, interacts with FloT.

It localises to the cell membrane. It is found in the membrane raft. It carries out the reaction N(pros)-phospho-L-histidyl-[protein] + N-acetyl-D-glucosamine(out) = N-acetyl-D-glucosamine 6-phosphate(in) + L-histidyl-[protein]. Functionally, the phosphoenolpyruvate-dependent sugar phosphotransferase system (sugar PTS), a major carbohydrate active -transport system, catalyzes the phosphorylation of incoming sugar substrates concomitantly with their translocation across the cell membrane. This system is involved in N-acetylglucosamine transport. The sequence is that of PTS system N-acetylglucosamine-specific EIICB component (nagP) from Bacillus subtilis (strain 168).